The primary structure comprises 592 residues: V-type ATP synthase alpha chain 1 (592 aa).

233–240 (GPFGSGKT) is a binding site for ATP.

The protein belongs to the ATPase alpha/beta chains family.

The catalysed reaction is ATP + H2O + 4 H(+)(in) = ADP + phosphate + 5 H(+)(out). Produces ATP from ADP in the presence of a proton gradient across the membrane. The V-type alpha chain is a catalytic subunit. The protein is V-type ATP synthase alpha chain 1 of Clostridium tetani (strain Massachusetts / E88).